The sequence spans 262 residues: Vibriobactin-specific 2,3-dihydro-2,3-dihydroxybenzoate dehydrogenase (262 aa).

Residue 12–36 (LLVGSARGIGFSVLEHLLQAGAQVM) participates in NAD(+) binding. Position 145 (serine 145) interacts with substrate. Residue tyrosine 158 is the Proton acceptor of the active site.

This sequence belongs to the short-chain dehydrogenases/reductases (SDR) family.

The enzyme catalyses (2S,3S)-2,3-dihydroxy-2,3-dihydrobenzoate + NAD(+) = 2,3-dihydroxybenzoate + NADH + H(+). Its pathway is siderophore biosynthesis; vibriobactin biosynthesis. In terms of biological role, involved in an early step of the biosynthesis of the catechol siderophore vibriobactin. Vibriobactin is a chelating compound involved in transporting iron from the bacterial environment into the cell cytoplasm. The sequence is that of Vibriobactin-specific 2,3-dihydro-2,3-dihydroxybenzoate dehydrogenase (vibA) from Vibrio cholerae serotype O1 (strain ATCC 39315 / El Tor Inaba N16961).